A 785-amino-acid chain; its full sequence is MEKKVEAILEFDKIKKQLTEFASSSLGEQAILELAPATDFQVVQKTQLETEEGAKIIRLRGSAPITGLTDVFAHLKRLEIGGDLNGLEIYQIGSNLRVSRQMKNFMNDLLEIGVEIPLLGALSDELLVLKEVEEDIAISVDESGKVLDTASEALSTIRRTLRRTEDRVREKLESYLRDRNASKMLSDAVITIRNDRYVIPVKQEYKGHYGGIVHDQSASGQTLFIEPQSVVDLNNERKALQAKEKQEIERILAEISASLAAWINEIHHNTFILGRFDFIFAKARFGKAMKAVTPHLSDAGVVHLIAARHPLLDAAKVVANDIYLGEDFTTIVITGPNTGGKTITLKTLGLLTLMAQSGLQIPAQEDSTIAVFEHVFADIGDEQSIEQSLSTFSSHMTNIVSILENVNQKSLILYDELGAGTDPQEGAALAIAILDASHAKGASVVATTHYPELKAYGYNRVHATNASVEFNVETLSPTYKLLIGVPGRSNAFDISRRLGLSENIITEARSLVDTESADLNDMISSLEEKRNLAETEYEEARELARGADSLLKDLQKEISNYYQQKDKLIEQASEKAATIVEKAEAEAEEIIHELRTMQLNGAAGIKEHELIDAKTRLGNAKPKTINKTIPQAPKQKPHVFQEGDNVRVLSLGQKGTLLNKISDKEWNVQIGIIKMKIKTADLEYIQPEKPKKQRIITSVHSSGSPAKSELDLRGERYEDALQKVDKYLDEALLAGYPQVAIIHGKGTGALRTGVTEYLKNHRMVKSIRFGAAAEGGNGVTIVEFK.

335-342 contributes to the ATP binding site; it reads GPNTGGKT. Residues 710–785 enclose the Smr domain; the sequence is LDLRGERYED…GNGVTIVEFK (76 aa).

It belongs to the DNA mismatch repair MutS family. MutS2 subfamily. As to quaternary structure, homodimer. Binds to stalled ribosomes, contacting rRNA.

Its function is as follows. Endonuclease that is involved in the suppression of homologous recombination and thus may have a key role in the control of bacterial genetic diversity. Functionally, acts as a ribosome collision sensor, splitting the ribosome into its 2 subunits. Detects stalled/collided 70S ribosomes which it binds and splits by an ATP-hydrolysis driven conformational change. Acts upstream of the ribosome quality control system (RQC), a ribosome-associated complex that mediates the extraction of incompletely synthesized nascent chains from stalled ribosomes and their subsequent degradation. Probably generates substrates for RQC. This chain is Endonuclease MutS2, found in Listeria monocytogenes serotype 4a (strain HCC23).